Reading from the N-terminus, the 190-residue chain is Secretory phospholipase A2 (190 aa).

Positions 1 to 15 (MKLAYFSSLLPLALA) are cleaved as a signal peptide. Cysteine 62 and cysteine 78 are disulfide-bonded. Alanine 65 lines the Ca(2+) pocket. Histidine 81 is an active-site residue. Residue aspartate 82 participates in Ca(2+) binding.

Belongs to the phospholipase A2 family. Requires Ca(2+) as cofactor.

Its subcellular location is the lipid droplet. The protein resides in the secreted. It carries out the reaction a 1,2-diacyl-sn-glycero-3-phosphocholine + H2O = a 1-acyl-sn-glycero-3-phosphocholine + a fatty acid + H(+). Its function is as follows. Secretory phospholipase that catalyzes the calcium-dependent hydrolysis of the 2-acyl groups in 3-sn-phosphoglycerides. Increases the ability to utilize insect-derived nutrients and lipids, and promotes lipid dropplets accumulation. Plays a role in virulence, including more efficient penetration of the insect cuticle and evasion of host immune response by repressing the expression of host immunity genes. In Beauveria bassiana (strain ARSEF 2860) (White muscardine disease fungus), this protein is Secretory phospholipase A2.